Consider the following 152-residue polypeptide: MELTTRTMATAKNIALIAHDHCKTSLLAWSKKHKSLLKKHHLYATGTTGNLIQNETGLSVTNMLSGPMGGDQQIGSLISEGKIDVLIFFWDPLNSVPHDPDVKALLRLATVWNIPVATNLASADFIVSSPLFSESVDIQVPDYQHYLNGRLK.

Residues 6-152 enclose the MGS-like domain; sequence RTMATAKNIA…YQHYLNGRLK (147 aa). Substrate contacts are provided by residues His-19, Lys-23, 45–48, and 65–66; these read TGTT and SG. Catalysis depends on Asp-71, which acts as the Proton donor/acceptor. His-98 is a binding site for substrate.

Belongs to the methylglyoxal synthase family.

The enzyme catalyses dihydroxyacetone phosphate = methylglyoxal + phosphate. Catalyzes the formation of methylglyoxal from dihydroxyacetone phosphate. The chain is Methylglyoxal synthase from Photorhabdus laumondii subsp. laumondii (strain DSM 15139 / CIP 105565 / TT01) (Photorhabdus luminescens subsp. laumondii).